Here is an 871-residue protein sequence, read N- to C-terminus: Probable LRR receptor-like serine/threonine-protein kinase At1g51810 (871 aa).

An N-terminal signal peptide occupies residues 1-20 (MERHCLFFVIFSLILHLVQA). At 21–512 (QDPIGFINLD…GRQIKSMTIP (492 aa)) the chain is on the extracellular side. N-linked (GlcNAc...) asparagine glycans are attached at residues asparagine 93, asparagine 179, asparagine 229, asparagine 283, asparagine 295, asparagine 396, asparagine 410, asparagine 439, asparagine 458, asparagine 463, and asparagine 489. LRR repeat units follow at residues 405 to 426 (IITS…TIQN), 429 to 449 (NLQE…EFLA), and 453 to 474 (SLLV…KLIE). A helical membrane pass occupies residues 513 to 533 (IVASIGSVVAFTVALMIFCVV). Residues 534 to 871 (RKNNPSNDEA…FGTEVAPMAR (338 aa)) lie on the Cytoplasmic side of the membrane. Phosphothreonine is present on threonine 568. One can recognise a Protein kinase domain in the interval 577-850 (NNFQKILGKG…QVVFELKECL (274 aa)). ATP contacts are provided by residues 583 to 591 (LGKGGFGIV) and lysine 605. The residue at position 650 (tyrosine 650) is a Phosphotyrosine. Aspartate 702 serves as the catalytic Proton acceptor. Serine 736 is modified (phosphoserine). Threonine 737 and threonine 742 each carry phosphothreonine. Tyrosine 750 is subject to Phosphotyrosine.

The protein belongs to the protein kinase superfamily. Ser/Thr protein kinase family.

Its subcellular location is the membrane. It carries out the reaction L-seryl-[protein] + ATP = O-phospho-L-seryl-[protein] + ADP + H(+). The enzyme catalyses L-threonyl-[protein] + ATP = O-phospho-L-threonyl-[protein] + ADP + H(+). This is Probable LRR receptor-like serine/threonine-protein kinase At1g51810 from Arabidopsis thaliana (Mouse-ear cress).